Here is a 200-residue protein sequence, read N- to C-terminus: MFNIPAVAVSYLIGSLSFAVIVSKYYGMDDPRTYGSGNPGATNVLRSGKKKAAALTLLGDAAKGLVAVLLARVLQEPLGLSDSAIAAVALAALVGHMWPVFFGFKGGKGVATALGVLLALSPTTALVCALIWLVMAFGFKVSSLAALTATIAAPLAALFFMPHTSWIFATLAIAILVLLRHKSNILNLIKGKESKIGEKR.

5 helical membrane passes run Phe-2–Val-22, Lys-51–Ala-71, Ala-84–Phe-104, Leu-114–Val-134, and Leu-158–Leu-178.

The protein belongs to the PlsY family. Probably interacts with PlsX.

It localises to the cell inner membrane. It carries out the reaction an acyl phosphate + sn-glycerol 3-phosphate = a 1-acyl-sn-glycero-3-phosphate + phosphate. The protein operates within lipid metabolism; phospholipid metabolism. Functionally, catalyzes the transfer of an acyl group from acyl-phosphate (acyl-PO(4)) to glycerol-3-phosphate (G3P) to form lysophosphatidic acid (LPA). This enzyme utilizes acyl-phosphate as fatty acyl donor, but not acyl-CoA or acyl-ACP. The chain is Glycerol-3-phosphate acyltransferase from Neisseria meningitidis serogroup A / serotype 4A (strain DSM 15465 / Z2491).